Here is a 280-residue protein sequence, read N- to C-terminus: Thiamine-phosphate synthase (280 aa).

The segment at Met1 to Thr64 is disordered. The span at Gly42–Ala55 shows a compositional bias: basic and acidic residues. Residues Gln104–Lys108 and Asn141 each bind 4-amino-2-methyl-5-(diphosphooxymethyl)pyrimidine. Mg(2+) is bound by residues Asp142 and Asp161. Ser179 contacts 4-amino-2-methyl-5-(diphosphooxymethyl)pyrimidine. Thr205–Thr207 provides a ligand contact to 2-[(2R,5Z)-2-carboxy-4-methylthiazol-5(2H)-ylidene]ethyl phosphate. Lys208 is a binding site for 4-amino-2-methyl-5-(diphosphooxymethyl)pyrimidine. Gly236 contributes to the 2-[(2R,5Z)-2-carboxy-4-methylthiazol-5(2H)-ylidene]ethyl phosphate binding site.

The protein belongs to the thiamine-phosphate synthase family. Mg(2+) is required as a cofactor.

The catalysed reaction is 2-[(2R,5Z)-2-carboxy-4-methylthiazol-5(2H)-ylidene]ethyl phosphate + 4-amino-2-methyl-5-(diphosphooxymethyl)pyrimidine + 2 H(+) = thiamine phosphate + CO2 + diphosphate. It carries out the reaction 2-(2-carboxy-4-methylthiazol-5-yl)ethyl phosphate + 4-amino-2-methyl-5-(diphosphooxymethyl)pyrimidine + 2 H(+) = thiamine phosphate + CO2 + diphosphate. It catalyses the reaction 4-methyl-5-(2-phosphooxyethyl)-thiazole + 4-amino-2-methyl-5-(diphosphooxymethyl)pyrimidine + H(+) = thiamine phosphate + diphosphate. The protein operates within cofactor biosynthesis; thiamine diphosphate biosynthesis; thiamine phosphate from 4-amino-2-methyl-5-diphosphomethylpyrimidine and 4-methyl-5-(2-phosphoethyl)-thiazole: step 1/1. Condenses 4-methyl-5-(beta-hydroxyethyl)thiazole monophosphate (THZ-P) and 2-methyl-4-amino-5-hydroxymethyl pyrimidine pyrophosphate (HMP-PP) to form thiamine monophosphate (TMP). This Deinococcus radiodurans (strain ATCC 13939 / DSM 20539 / JCM 16871 / CCUG 27074 / LMG 4051 / NBRC 15346 / NCIMB 9279 / VKM B-1422 / R1) protein is Thiamine-phosphate synthase.